The sequence spans 69 residues: Double-strand break reduction protein (69 aa).

Functionally, helps to maintain the integrity of the chromosome by lowering the steady-state level of double strand breaks. This region of DNA acts as an antitoxin to toxin RalR, a DNase, but it seems to be sRNA RalA that has the antitoxin activity and not this putative protein. Therefore the identity of this as a protein-coding gene has been cast into doubt. The sequence is that of Double-strand break reduction protein from Escherichia coli (strain K12).